The primary structure comprises 88 residues: UPF0250 protein bbp_432 (88 aa).

It belongs to the UPF0250 family.

The chain is UPF0250 protein bbp_432 from Buchnera aphidicola subsp. Baizongia pistaciae (strain Bp).